We begin with the raw amino-acid sequence, 461 residues long: RCC1-like G exchanging factor-like protein (461 aa).

The span at 1 to 10 shows a compositional bias: low complexity; sequence MLAAARALRG. Residues 1–34 constitute a mitochondrion transit peptide; that stretch reads MLAAARALRGPRPRWPTPAREHWTPAGRSRSRRE. A disordered region spans residues 1–35; it reads MLAAARALRGPRPRWPTPAREHWTPAGRSRSRREA. RCC1 repeat units follow at residues 55–121, 125–188, 190–244, 245–297, 298–350, 352–408, and 409–458; these read ADRV…LSSK, VTKV…VLTD, EGVF…FLTD, KGEV…ALSA, DGGV…VLNA, GHVF…ALTN, and KGEL…TLAK.

In terms of assembly, forms a regulatory protein-RNA complex, consisting of RCC1L, NGRN, RPUSD3, RPUSD4, TRUB2, FASTKD2 and 16S mt-rRNA. Interacts with 16S mt-rRNA; this interaction is direct. Interacts with OPA1; this interaction is direct. As to expression, at E8.5, broadly expressed in yolk sac placenta, decidua, and embryo, with highest levels found in the trophoblast giant cells (TGCs) and ectoplacental cone (at protein level).

The protein resides in the mitochondrion inner membrane. Functionally, guanine nucleotide exchange factor (GEF) for mitochondrial dynamin-related GTPase OPA1. Activates OPA1, by exchanging bound GDP for free GTP, and drives OPA1 and MFN1-dependent mitochondrial fusion. Plays an essential role in mitochondrial ribosome biogenesis. As a component of a functional protein-RNA module, consisting of RCC1L, NGRN, RPUSD3, RPUSD4, TRUB2, FASTKD2 and 16S mitochondrial ribosomal RNA (16S mt-rRNA), controls 16S mt-rRNA abundance and is required for intra-mitochondrial translation of core subunits of the oxidative phosphorylation system. The sequence is that of RCC1-like G exchanging factor-like protein from Mus musculus (Mouse).